The following is a 267-amino-acid chain: Dolichol-phosphate mannosyltransferase (267 aa).

At Ser-2 the chain carries N-acetylserine. Over 2-238 (SIEYSVIVPA…QQLKELYVFK (237 aa)) the chain is Cytoplasmic. Residues Pro-10, Tyr-12, Glu-14, Val-42, Asp-44, Asp-95, Ala-96, Asp-97, Gln-99, and Arg-122 each coordinate GDP-alpha-D-mannose. The Mg(2+) site is built by Asp-97 and Gln-99. Mn(2+) is bound by residues Asp-97 and Gln-99. Residue Ser-141 is modified to Phosphoserine; by PKA. GDP-alpha-D-mannose is bound by residues Lys-183, Arg-212, and Lys-218. Residues 239 to 259 (FGANNLILFITFWSILFFYVC) traverse the membrane as a helical; Anchor for type IV membrane protein segment. Residues 260-267 (YQLYHLVF) lie on the Lumenal side of the membrane.

This sequence belongs to the glycosyltransferase 2 family. In terms of assembly, interacts with the C-terminus of SAC1, thereby sequestering it to the endoplasmic reticulum in exponentially growing cells. Under nutrient limitation conditions, this interaction is rapidly abolished. The cofactor is Mg(2+). It depends on Mn(2+) as a cofactor. Ca(2+) serves as cofactor.

Its subcellular location is the endoplasmic reticulum membrane. It catalyses the reaction a di-trans,poly-cis-dolichyl phosphate + GDP-alpha-D-mannose = a di-trans,poly-cis-dolichyl beta-D-mannosyl phosphate + GDP. The protein operates within protein modification; protein glycosylation. Its activity is regulated as follows. Inhibited by acetylsalicylic acid (aspirin). Functionally, transfers mannose from GDP-mannose to dolichol monophosphate to form dolichol phosphate mannose (Dol-P-Man) which is the mannosyl donor in pathways leading to N-glycosylation, glycosyl phosphatidylinositol membrane anchoring, and O-mannosylation of proteins. In Saccharomyces cerevisiae (strain ATCC 204508 / S288c) (Baker's yeast), this protein is Dolichol-phosphate mannosyltransferase.